Here is a 655-residue protein sequence, read N- to C-terminus: MERKVLALQARKKRTKAKKDKAQRKPETQHRGSAPHSESDLPEQEEEILGSDDDEQEDPNDYCKGGYHLVKIGDLFNGRYHVIRKLGWGHFSTVWLSWDIQGKKFVAMKVVKSAEHYTETALDEIRLLKSVRNSDPNDPNREMVVQLLDDFKISGVNGTHICMVFEVLGHHLLKWIIKSNYQGLPLPCVKKIIQQVLQGLDYLHTKCRIIHTDIKPENILLSVNEQYIRRLAAEATEWQRSGAPPPSGSAVSTAPQPKPADKMSKNKKKKLKKKQKRQAELLEKRMQEIEEMEKESGPGQKRPNKQEESESPVERPLKENPPNKMTQEKLEESSTIGQDQTLMERDTEGGAAEINCNGVVEVINYTQNSNNETLRHKEDLHNANDCDVQNLNQESSFLSSQNGDSSTSQETDSCTPITSEVSDTMVCQSSSTVDQSFSEQHISQLQESIRVEIPCEDEQEQEHNGPLDNKGKSTAGNFLVNPLEPKNAEKLKVKIADLGNACWVHKHFTEDIQTRQYRSLEVLIGSGYNTPADIWSTACMAFELATGDYLFEPHSGEEYTRDEDHIALIIELLGKVPRKLIVAGKYSKEFFTKKGDLKHITKLKPWGLFEVLVEKYEWSQEEAAGFTDFLLPMLELIPEKRATAAECLRHPWLNS.

The tract at residues 1–57 (MERKVLALQARKKRTKAKKDKAQRKPETQHRGSAPHSESDLPEQEEEILGSDDDEQE) is disordered. Positions 10–22 (ARKKRTKAKKDKA) are enriched in basic residues. Residues 40–57 (DLPEQEEEILGSDDDEQE) show a composition bias toward acidic residues. Ser-51 is subject to Phosphoserine; by CK2. The Protein kinase domain maps to 80–653 (YHVIRKLGWG…AAECLRHPWL (574 aa)). ATP is bound by residues 86–94 (LGWGHFSTV) and Lys-109. Asp-213 serves as the catalytic Proton acceptor. Disordered regions lie at residues 238-341 (WQRS…QDQT) and 397-417 (FLSS…CTPI). Residues 265 to 276 (KNKKKKLKKKQK) are compositionally biased toward basic residues. 2 stretches are compositionally biased toward basic and acidic residues: residues 277–288 (RQAELLEKRMQE) and 304–318 (NKQE…RPLK). Phosphoserine is present on residues Ser-309, Ser-311, and Ser-333. A Phosphoserine; by CK2 modification is found at Ser-555.

Belongs to the protein kinase superfamily. CMGC Ser/Thr protein kinase family. As to quaternary structure, monomer. Found in a multisubunit complex containing seven proteins, named toposome, which separates entangled circular chromatin DNA during chromosome segregation. Interacts with HHV-1 ICP27 protein. Interacts with DNAJC8 and AHSA1/AHA1 and this mediates formation of a complex with the Hsp70 /Hsp90 machinery. Binds to IGF2BP1, SYNCRIP, HNRNPA2B1 and HNRNPC. Interacts with SAFB/SAFB1 and SAFB2 which inhibits its activity. The cofactor is Mg(2+).

The protein localises to the cytoplasm. It localises to the nucleus. The protein resides in the nucleoplasm. It is found in the nucleus matrix. Its subcellular location is the microsome. The protein localises to the nucleus speckle. It localises to the chromosome. The catalysed reaction is L-seryl-[protein] + ATP = O-phospho-L-seryl-[protein] + ADP + H(+). It catalyses the reaction L-threonyl-[protein] + ATP = O-phospho-L-threonyl-[protein] + ADP + H(+). Its activity is regulated as follows. Activated by phosphorylation on Ser-51 and Ser-555. In terms of biological role, serine/arginine-rich protein-specific kinase which specifically phosphorylates its substrates at serine residues located in regions rich in arginine/serine dipeptides, known as RS domains and is involved in the phosphorylation of SR splicing factors and the regulation of splicing. Plays a central role in the regulatory network for splicing, controlling the intranuclear distribution of splicing factors in interphase cells and the reorganization of nuclear speckles during mitosis. Can influence additional steps of mRNA maturation, as well as other cellular activities, such as chromatin reorganization in somatic and sperm cells and cell cycle progression. Phosphorylates SFRS2, ZRSR2, LBR and PRM1. Phosphorylates SRSF1 using a directional (C-terminal to N-terminal) and a dual-track mechanism incorporating both processive phosphorylation (in which the kinase stays attached to the substrate after each round of phosphorylation) and distributive phosphorylation steps (in which the kinase and substrate dissociate after each phosphorylation event). The RS domain of SRSF1 binds first to a docking groove in the large lobe of the kinase domain of SRPK1. This induces certain structural changes in SRPK1 and/or RRM2 domain of SRSF1, allowing RRM2 to bind the kinase and initiate phosphorylation. The cycles continue for several phosphorylation steps in a processive manner (steps 1-8) until the last few phosphorylation steps (approximately steps 9-12). During that time, a mechanical stress induces the unfolding of the beta-4 motif in RRM2, which then docks at the docking groove of SRPK1. This also signals RRM2 to begin to dissociate, which facilitates SRSF1 dissociation after phosphorylation is completed. Can mediate hepatitis B virus (HBV) core protein phosphorylation. It plays a negative role in the regulation of HBV replication through a mechanism not involving the phosphorylation of the core protein but by reducing the packaging efficiency of the pregenomic RNA (pgRNA) without affecting the formation of the viral core particles. Can induce splicing of exon 10 in MAPT/TAU. This is SRSF protein kinase 1 from Pongo abelii (Sumatran orangutan).